A 419-amino-acid polypeptide reads, in one-letter code: Endothiapepsin (419 aa).

A signal peptide spans 1–20 (MSSPLKNALVTAMLAGGALS). The propeptide at 21-89 (SPTKQHVGIP…QNSTSGLAER (69 aa)) is activation peptide. The region spanning 106 to 417 (YITPVQIGTP…GATTPTLGFA (312 aa)) is the Peptidase A1 domain. Active-site residues include aspartate 124 and serine 288. A disulfide bridge links cysteine 344 with cysteine 379.

It belongs to the peptidase A1 family.

It carries out the reaction Hydrolysis of proteins with specificity similar to that of pepsin A, prefers hydrophobic residues at P1 and P1', but does not cleave 14-Ala-|-Leu-15 in the B chain of insulin or Z-Glu-Tyr. Clots milk.. This Cryphonectria parasitica (Chestnut blight fungus) protein is Endothiapepsin (EAPA).